A 101-amino-acid chain; its full sequence is Small ribosomal subunit protein uS14 (101 aa).

The protein belongs to the universal ribosomal protein uS14 family. In terms of assembly, part of the 30S ribosomal subunit. Contacts proteins S3 and S10.

In terms of biological role, binds 16S rRNA, required for the assembly of 30S particles and may also be responsible for determining the conformation of the 16S rRNA at the A site. This is Small ribosomal subunit protein uS14 from Shewanella amazonensis (strain ATCC BAA-1098 / SB2B).